We begin with the raw amino-acid sequence, 274 residues long: 4-diphosphocytidyl-2-C-methyl-D-erythritol kinase (274 aa).

Residue Lys8 is part of the active site. 92-102 is a binding site for ATP; the sequence is PSGAGLGGGSS. The active site involves Asp134.

Belongs to the GHMP kinase family. IspE subfamily.

It carries out the reaction 4-CDP-2-C-methyl-D-erythritol + ATP = 4-CDP-2-C-methyl-D-erythritol 2-phosphate + ADP + H(+). Its pathway is isoprenoid biosynthesis; isopentenyl diphosphate biosynthesis via DXP pathway; isopentenyl diphosphate from 1-deoxy-D-xylulose 5-phosphate: step 3/6. In terms of biological role, catalyzes the phosphorylation of the position 2 hydroxy group of 4-diphosphocytidyl-2C-methyl-D-erythritol. This Porphyromonas gingivalis (strain ATCC 33277 / DSM 20709 / CIP 103683 / JCM 12257 / NCTC 11834 / 2561) protein is 4-diphosphocytidyl-2-C-methyl-D-erythritol kinase.